The primary structure comprises 35 residues: Delta-theraphotoxin-Hm1a (35 aa).

3 cysteine pairs are disulfide-bonded: Cys2–Cys16, Cys9–Cys21, and Cys15–Cys28.

Belongs to the neurotoxin 10 (Hwtx-1) family. 09 (HaTx) subfamily. Expressed by the venom gland.

It is found in the secreted. Its function is as follows. Gating-modifier toxin that potently inhibits inactivation of the mammalian Nav1.1/SCN1A sodium channel (EC(50)=38 nM). Also moderately inhibits inactivation of Nav1.2/SCN2A (EC(50)=236 nM) and Nav1.3/SCN3A (EC(50)=220 nM) when the channels are expressed in oocytes without the beta-1 auxiliary subunit. Does not inhibit inactivation of Nav1.2/SCN2A when the channel is coexpressed with the beta-1 auxiliary subunit. When tested on Nav1.1/SCN1A channel, it enhances peak current amplitude and potently delays channel inactivation in a dose-dependent manner, leading to a large sustained current. It has no effect on the voltage-dependence of steady-state activation, and induces a depolarizing shift in the voltage dependence of inactivation. In addition, it does not modify the recovery from fast inactivation in Nav1.1/SCN1A. The binding affinity and subtype selectivity of the toxin towards Nav1.1/SCN1A channel is determined by residues within both the S1-S2 and S3-S4 loops of the domain IV voltage sensor of the channel. This toxin also weakly inhibits several subtypes of voltage-gated potassium channels. It moderately blocks Kv2.1/KCNB1 (23% inhibition at 100 nM), Kv2.2/KCNB2 (19.7% at 100 nM and 51% at 300 nM), Kv4.1/KCND1 (IC(50)=280 nM), Kv4.2/KCND2 (39% at 300 nM) and Kv4.3/KCND3 (43% at 300 nM). In vivo, intracerebroventricular injection into mice elicits convulsions, spasms, tremors and rapid death. When injected into mouse hindpaw, the toxin elicits an immediate and robust response to pain. However, intraplantar injection of toxin does not cause neurogenic inflammation or alter sensitivity to heat, indicative of a modality-specific effect on mechanosensitive neurons. In Dravet syndrome mice model, intracerebroventricular infusion of this peptide rescues mice from seizures and premature death. This is Delta-theraphotoxin-Hm1a from Heteroscodra maculata (Togo starburst tarantula).